Here is a 495-residue protein sequence, read N- to C-terminus: Ribosomal protein uS12 methylthiotransferase RimO (495 aa).

An MTTase N-terminal domain is found at 5-121; it reads RTVALVTLGC…ISDRLQTILN (117 aa). Positions 14, 50, and 84 each coordinate [4Fe-4S] cluster. The interval 145–183 is disordered; it reads QSAGADVALPGHGAPEGLPEDLPEGLAPESGPRAPLRRR. The Radical SAM core domain maps to 184–415; the sequence is LDGSPVASVK…RLAEELVAQR (232 aa). Positions 198, 202, and 205 each coordinate [4Fe-4S] cluster. A TRAM domain is found at 417–484; the sequence is EERVGETVHV…GVDLVAEPLP (68 aa).

This sequence belongs to the methylthiotransferase family. RimO subfamily. The cofactor is [4Fe-4S] cluster.

Its subcellular location is the cytoplasm. It carries out the reaction L-aspartate(89)-[ribosomal protein uS12]-hydrogen + (sulfur carrier)-SH + AH2 + 2 S-adenosyl-L-methionine = 3-methylsulfanyl-L-aspartate(89)-[ribosomal protein uS12]-hydrogen + (sulfur carrier)-H + 5'-deoxyadenosine + L-methionine + A + S-adenosyl-L-homocysteine + 2 H(+). Functionally, catalyzes the methylthiolation of an aspartic acid residue of ribosomal protein uS12. This Streptomyces avermitilis (strain ATCC 31267 / DSM 46492 / JCM 5070 / NBRC 14893 / NCIMB 12804 / NRRL 8165 / MA-4680) protein is Ribosomal protein uS12 methylthiotransferase RimO.